Here is a 247-residue protein sequence, read N- to C-terminus: Probable transcriptional regulatory protein BHWA1_01533 (247 aa).

The segment at 1–22 (MSGHSKWASIKHKKAANDSKKG) is disordered.

This sequence belongs to the TACO1 family.

It localises to the cytoplasm. The sequence is that of Probable transcriptional regulatory protein BHWA1_01533 from Brachyspira hyodysenteriae (strain ATCC 49526 / WA1).